The following is a 128-amino-acid chain: Iron-sulfur cluster insertion protein ErpA (128 aa).

Iron-sulfur cluster contacts are provided by Cys56, Cys120, and Cys122.

The protein belongs to the HesB/IscA family. As to quaternary structure, homodimer. Iron-sulfur cluster serves as cofactor.

Its function is as follows. Required for insertion of 4Fe-4S clusters for at least IspG. The sequence is that of Iron-sulfur cluster insertion protein ErpA from Xanthomonas campestris pv. campestris (strain 8004).